A 192-amino-acid polypeptide reads, in one-letter code: ADP-ribosylation factor-like protein 14 (192 aa).

Gly-2 carries the N-myristoyl glycine lipid modification. GTP contacts are provided by residues 20–27 (GLDSAGKS), 64–68 (DVGGQ), and 123–126 (NKQD).

It belongs to the small GTPase superfamily. Arf family. Interacts with ARL14EP. As to expression, expressed in immature dendritic cells.

The protein resides in the cytoplasmic vesicle. Its function is as follows. GTPase that recruits MYO1E to MHC class II-containing vesicles via the effector protein ARL14EP and hence controls the movement of these vesicles along the actin cytoskeleton in dendritic cells. This chain is ADP-ribosylation factor-like protein 14 (ARL14), found in Homo sapiens (Human).